We begin with the raw amino-acid sequence, 31 residues long: Cytochrome b6-f complex subunit 6 (31 aa).

The chain crosses the membrane as a helical span at residues 4 to 24; the sequence is IISYFGLLLATLTFTIVLFVG.

The protein belongs to the PetL family. In terms of assembly, the 4 large subunits of the cytochrome b6-f complex are cytochrome b6, subunit IV (17 kDa polypeptide, PetD), cytochrome f and the Rieske protein, while the 4 small subunits are PetG, PetL, PetM and PetN. The complex functions as a dimer.

The protein localises to the plastid. It localises to the chloroplast thylakoid membrane. Its function is as follows. Component of the cytochrome b6-f complex, which mediates electron transfer between photosystem II (PSII) and photosystem I (PSI), cyclic electron flow around PSI, and state transitions. PetL is important for photoautotrophic growth as well as for electron transfer efficiency and stability of the cytochrome b6-f complex. The chain is Cytochrome b6-f complex subunit 6 from Staurastrum punctulatum (Green alga).